Here is a 272-residue protein sequence, read N- to C-terminus: S-adenosylmethionine decarboxylase proenzyme (272 aa).

Serine 117 serves as the catalytic Schiff-base intermediate with substrate; via pyruvic acid. Pyruvic acid (Ser); by autocatalysis is present on serine 117. The Proton acceptor; for processing activity role is filled by histidine 122. Cysteine 145 serves as the catalytic Proton donor; for catalytic activity.

The protein belongs to the prokaryotic AdoMetDC family. Type 2 subfamily. As to quaternary structure, heterooctamer of four alpha and four beta chains arranged as a tetramer of alpha/beta heterodimers. The cofactor is pyruvate. In terms of processing, is synthesized initially as an inactive proenzyme. Formation of the active enzyme involves a self-maturation process in which the active site pyruvoyl group is generated from an internal serine residue via an autocatalytic post-translational modification. Two non-identical subunits are generated from the proenzyme in this reaction, and the pyruvate is formed at the N-terminus of the alpha chain, which is derived from the carboxyl end of the proenzyme. The post-translation cleavage follows an unusual pathway, termed non-hydrolytic serinolysis, in which the side chain hydroxyl group of the serine supplies its oxygen atom to form the C-terminus of the beta chain, while the remainder of the serine residue undergoes an oxidative deamination to produce ammonia and the pyruvoyl group blocking the N-terminus of the alpha chain.

The catalysed reaction is S-adenosyl-L-methionine + H(+) = S-adenosyl 3-(methylsulfanyl)propylamine + CO2. It participates in amine and polyamine biosynthesis; S-adenosylmethioninamine biosynthesis; S-adenosylmethioninamine from S-adenosyl-L-methionine: step 1/1. Catalyzes the decarboxylation of S-adenosylmethionine to S-adenosylmethioninamine (dcAdoMet), the propylamine donor required for the synthesis of the polyamines spermine and spermidine from the diamine putrescine. This chain is S-adenosylmethionine decarboxylase proenzyme, found in Halorhodospira halophila (strain DSM 244 / SL1) (Ectothiorhodospira halophila (strain DSM 244 / SL1)).